Consider the following 1056-residue polypeptide: MPKKSHIKKVLIIGSGPIQIGQAAEFDFSGSQACRALREEGVEVVLVNSNPATIQTDPDTADVIYIEPLKAELIAKIIAKEKPDGILSGMGGQTGLNMTAELAEMGALEGVEILGTPLEAIYRGEDREQFRDLMNAIGEPVPRSMILEHMNQIDEAIREVGLPAIIRPAYTLGGSGGGVAHTPEEMRRICELGLARSRIHQVLVEESVAGWKEIEFEVMRDAADTCIIVCGMENVDPMGIHTGESVVVAPILTLRDDEFQTLRTAAIKIIRALDVQGGCNIQFAYKDGDYRIIEVNPRVSRSSALASKATGYPIARVAAKIAIGLRLDEIMNTVTGVTPASFEPAIDYVVVKVPRWPFDKFKSADRTLTTAMKSTGEVMAIGRTVEEAFKKALRSLDNDMQQHTNPSEIRMILTSPTDERFGCLFDAFREGFTVREIAELTAITPFFLEKIKNIVDLERKLETDFEPEDVRVARRSGFSDEDLLALTKKTAGEIEALGGTPTYKMVDTCAAEFPATTPYFYSTWEEGCELVRDSAKKVLILGSGPIRIGQGIEFDYCTVHAVMALREEEGIEVHIVNNNPETVSTDADTSDRLFFEPMQLEDVMNILKKDDYYGVMVQFGGQNSVNLAVPLEAEIRRLDLPTKILGTSPDAMDAAEDRDRFSRLLTRLEIPSPANSSAYSEEEAREMAGEIGYPVLVRPSYVLGGRAMELVHDEAELESYIKEAVRVSRKHPVLIDSFLQNAVEIDVDAVSDGTDVLIGGIMEHIEWAGVHSGDSACVIPPQSLTPSVIARVRDYTKKIALGLGVVGLINIQYAVRNDVVYVLEANPRASRTVPFVAKATGIALAKIAAKVMVGRKLADMGVAEPEIEHVAVKEVLLPFNKLPGVDTVLGPEMKSTGEVMGIDYDFGRAYYKACTAADNTLPTTGNVFISVTDEQKEELLPVARKLRELGLSLYGTSGTVDFLTQNGVEANLVRKVQEGSPNVIDAMRSGSIRLIINTPADKASRQDHIQIMRAAVDYGIPYITTLQAARAAAMAIDAIKREEITIEPLGHYHGLM.

A carboxyphosphate synthetic domain region spans residues 1-397; it reads MPKKSHIKKV…AFKKALRSLD (397 aa). 12 residues coordinate ATP: Arg127, Arg167, Gly173, Gly174, Glu206, Val208, Glu213, Gly239, Ile240, His241, Gln282, and Glu294. The 193-residue stretch at 131–323 folds into the ATP-grasp 1 domain; it reads RDLMNAIGEP…IARVAAKIAI (193 aa). Mg(2+) contacts are provided by Gln282, Glu294, and Asn296. Mn(2+)-binding residues include Gln282, Glu294, and Asn296. The interval 398-530 is oligomerization domain; the sequence is NDMQQHTNPS…YSTWEEGCEL (133 aa). The tract at residues 531–920 is carbamoyl phosphate synthetic domain; it reads VRDSAKKVLI…YKACTAADNT (390 aa). Residues 662–853 enclose the ATP-grasp 2 domain; sequence SRLLTRLEIP…LAKIAAKVMV (192 aa). Residues Arg698, Ser737, Leu739, Glu744, Gly769, Val770, His771, Ser772, Gln812, and Glu824 each coordinate ATP. Mg(2+)-binding residues include Gln812, Glu824, and Asn826. The Mn(2+) site is built by Gln812, Glu824, and Asn826. The region spanning 919–1056 is the MGS-like domain; the sequence is NTLPTTGNVF…EPLGHYHGLM (138 aa). Residues 921–1056 are allosteric domain; that stretch reads LPTTGNVFIS…EPLGHYHGLM (136 aa).

This sequence belongs to the CarB family. Composed of two chains; the small (or glutamine) chain promotes the hydrolysis of glutamine to ammonia, which is used by the large (or ammonia) chain to synthesize carbamoyl phosphate. Tetramer of heterodimers (alpha,beta)4. Requires Mg(2+) as cofactor. It depends on Mn(2+) as a cofactor.

The catalysed reaction is hydrogencarbonate + L-glutamine + 2 ATP + H2O = carbamoyl phosphate + L-glutamate + 2 ADP + phosphate + 2 H(+). It carries out the reaction hydrogencarbonate + NH4(+) + 2 ATP = carbamoyl phosphate + 2 ADP + phosphate + 2 H(+). Its pathway is amino-acid biosynthesis; L-arginine biosynthesis; carbamoyl phosphate from bicarbonate: step 1/1. The protein operates within pyrimidine metabolism; UMP biosynthesis via de novo pathway; (S)-dihydroorotate from bicarbonate: step 1/3. Functionally, large subunit of the glutamine-dependent carbamoyl phosphate synthetase (CPSase). CPSase catalyzes the formation of carbamoyl phosphate from the ammonia moiety of glutamine, carbonate, and phosphate donated by ATP, constituting the first step of 2 biosynthetic pathways, one leading to arginine and/or urea and the other to pyrimidine nucleotides. The large subunit (synthetase) binds the substrates ammonia (free or transferred from glutamine from the small subunit), hydrogencarbonate and ATP and carries out an ATP-coupled ligase reaction, activating hydrogencarbonate by forming carboxy phosphate which reacts with ammonia to form carbamoyl phosphate. The protein is Carbamoyl phosphate synthase large chain of Methanoculleus marisnigri (strain ATCC 35101 / DSM 1498 / JR1).